The primary structure comprises 418 residues: MNIFEELKARGLVFQTTDEEALVKALTEGQVSYYTGYDPTADSLHLGHLVAILTSRRLQLAGHKPYALVGGATGLIGDPSFKDAERILQTKETVLDWSQKIKEQLSCFLDFDNGENKAELVNNYDWFSQISFIDFLRDVGKHFTVNYMMSKDSVKKRIETGISYTEFAYQVMQGYDFYELNAKHNVTLQIGGSDQWGNMTAGTELLRKKADKTGHVMTVPLITDATGKKFGKSEGNAIWLDAKKTSPYEMYQFWLNVMDDDAVRFLKIFTFLSLDEIAAIEEQFNAARHERLAQKTLAREVVTLVHGEAAYQQALNITEQLFAGAIKNLSAAELKQGLSNVPNYQVQAEDSLNIVDMLVTAGISPSKRQAREDLQNGAIYLNGERLQDLDYSLSTADRIDNQLTVIRRGKKKYAVLTY.

Tyr34 contacts L-tyrosine. Positions 39–48 (PTADSLHLGH) match the 'HIGH' region motif. L-tyrosine is bound by residues Tyr169 and Gln173. A 'KMSKS' region motif is present at residues 229 to 233 (KFGKS). Lys232 provides a ligand contact to ATP. One can recognise an S4 RNA-binding domain in the interval 352–418 (LNIVDMLVTA…GKKKYAVLTY (67 aa)).

It belongs to the class-I aminoacyl-tRNA synthetase family. TyrS type 1 subfamily. Homodimer.

It is found in the cytoplasm. The catalysed reaction is tRNA(Tyr) + L-tyrosine + ATP = L-tyrosyl-tRNA(Tyr) + AMP + diphosphate + H(+). Functionally, catalyzes the attachment of tyrosine to tRNA(Tyr) in a two-step reaction: tyrosine is first activated by ATP to form Tyr-AMP and then transferred to the acceptor end of tRNA(Tyr). This chain is Tyrosine--tRNA ligase, found in Streptococcus equi subsp. zooepidemicus (strain MGCS10565).